Reading from the N-terminus, the 499-residue chain is MVVLSTLALVRAAYSLNSFVFEAEDIRFGSPWWFVVVGVACFLVLFAGIMSGLTLGLMSLGLVELEILQQSGSSAEKKQAAAILPVVKKQHQLLVTLLLCNAAAMEALPICLDKIFHPFVAVLLSVTFVLAFGEIIPQAICSRYGLAVGANFLWLVRILMIICYPIAYPIGKVLDAVIGHNDTLFRRAQLKALVSIHSQEAGKGGELTHEETMIISGALDLSQKTAEEAMTPIESTFSLDVNTKLDWETIGKILSRGHSRIPVYLGNPKNIIGLLLVKSLLTVRAETEAPVSSVSIRKIPRVPSDMPLYDILNEFQKGSSHMAAVVKVKDKDKKNNMQLLSNGETPKENMKFYQSSNLTAPLLKHESHDVVVDIDKVPKHVKNRGRNFQQNGTVTRDLPCLLEDNEDAEVIGIITLEDVFEELLQAEIVDETDVYIDVHKRVRVAAAAAAAVSSITRASPAEIQSKVGQTVKKLVGKEARGTKNYTTKITEPLLAESDR.

Residues 1–32 lie on the Extracellular side of the membrane; sequence MVVLSTLALVRAAYSLNSFVFEAEDIRFGSPW. The CNNM transmembrane domain occupies 29–211; that stretch reads GSPWWFVVVG…GKGGELTHEE (183 aa). The chain crosses the membrane as a helical span at residues 33–53; sequence WFVVVGVACFLVLFAGIMSGL. Residues 54-91 are Cytoplasmic-facing; it reads TLGLMSLGLVELEILQQSGSSAEKKQAAAILPVVKKQH. A helical membrane pass occupies residues 92 to 112; it reads QLLVTLLLCNAAAMEALPICL. Topologically, residues 113–114 are extracellular; it reads DK. The helical transmembrane segment at 115–135 threads the bilayer; that stretch reads IFHPFVAVLLSVTFVLAFGEI. Residues 136–145 lie on the Cytoplasmic side of the membrane; it reads IPQAICSRYG. The chain crosses the membrane as a helical span at residues 146–166; the sequence is LAVGANFLWLVRILMIICYPI. Residues 167–499 lie on the Extracellular side of the membrane; the sequence is AYPIGKVLDA…TEPLLAESDR (333 aa). An N-linked (GlcNAc...) asparagine glycan is attached at Asn181. CBS domains are found at residues 230–291, 295–359, and 365–431; these read MTPI…EAPV, SIRK…SNLT, and HESH…IVDE. Residues Asn357, Asn391, and Asn484 are each glycosylated (N-linked (GlcNAc...) asparagine).

The protein localises to the membrane. In Arabidopsis thaliana (Mouse-ear cress), this protein is Putative DUF21 domain-containing protein At1g03270 (CBSDUF4).